The sequence spans 357 residues: 3-isopropylmalate dehydrogenase (357 aa).

76 to 89 serves as a coordination point for NAD(+); sequence GPQWDTIDPALRPE. Residues R96, R106, R134, and D224 each contribute to the substrate site. D224, D248, and D252 together coordinate Mg(2+). 282–294 is an NAD(+) binding site; the sequence is GSAPDIAGKGIAN.

The protein belongs to the isocitrate and isopropylmalate dehydrogenases family. LeuB type 1 subfamily. Homodimer. The cofactor is Mg(2+). Requires Mn(2+) as cofactor.

Its subcellular location is the cytoplasm. It carries out the reaction (2R,3S)-3-isopropylmalate + NAD(+) = 4-methyl-2-oxopentanoate + CO2 + NADH. It participates in amino-acid biosynthesis; L-leucine biosynthesis; L-leucine from 3-methyl-2-oxobutanoate: step 3/4. In terms of biological role, catalyzes the oxidation of 3-carboxy-2-hydroxy-4-methylpentanoate (3-isopropylmalate) to 3-carboxy-4-methyl-2-oxopentanoate. The product decarboxylates to 4-methyl-2 oxopentanoate. This Xanthomonas axonopodis pv. citri (strain 306) protein is 3-isopropylmalate dehydrogenase.